The chain runs to 141 residues: Hemoglobin subunit alpha (141 aa).

The Globin domain occupies 1-141; that stretch reads VLSSKDKANI…VSTVLTSKYR (141 aa). Serine 3 is modified (phosphoserine). N6-succinyllysine is present on residues lysine 7 and lysine 11. An N6-acetyllysine; alternate modification is found at lysine 16. Lysine 16 is subject to N6-succinyllysine; alternate. Tyrosine 24 bears the Phosphotyrosine mark. Lysine 40 carries the post-translational modification N6-succinyllysine. Residue serine 49 is modified to Phosphoserine. Residue histidine 58 coordinates O2. Residue histidine 87 participates in heme b binding. Serine 102 is subject to Phosphoserine. Threonine 108 carries the phosphothreonine modification. The residue at position 124 (serine 124) is a Phosphoserine. Phosphothreonine occurs at positions 134 and 137. Serine 138 is subject to Phosphoserine.

The protein belongs to the globin family. As to quaternary structure, heterotetramer of two alpha chains and two beta chains. As to expression, red blood cells.

Its function is as follows. Involved in oxygen transport from the lung to the various peripheral tissues. Hemopressin acts as an antagonist peptide of the cannabinoid receptor CNR1. Hemopressin-binding efficiently blocks cannabinoid receptor CNR1 and subsequent signaling. The sequence is that of Hemoglobin subunit alpha (HBA) from Vicugna pacos (Alpaca).